The chain runs to 238 residues: Ribosomal RNA small subunit methyltransferase G (238 aa).

S-adenosyl-L-methionine contacts are provided by residues Gly78, Phe83, 129-130 (AE), and Arg148. The disordered stretch occupies residues 217-238 (KKKETPKKYPRKAGTPAKSPIK).

The protein belongs to the methyltransferase superfamily. RNA methyltransferase RsmG family.

The protein resides in the cytoplasm. Its function is as follows. Specifically methylates the N7 position of a guanine in 16S rRNA. The chain is Ribosomal RNA small subunit methyltransferase G from Lactococcus lactis subsp. cremoris (strain MG1363).